A 683-amino-acid chain; its full sequence is uncharacterized protein (683 aa).

3 coiled-coil regions span residues 62–124 (PEHY…RKER), 155–259 (TTTN…KLSQ), and 346–376 (KKSL…DGDV). A disordered region spans residues 213 to 237 (QDQVESQTGPKKRRKSPIENQPTAG).

This is an uncharacterized protein from Invertebrate iridescent virus 3 (IIV-3).